The primary structure comprises 211 residues: Probable nicotinate-nucleotide adenylyltransferase (211 aa).

This sequence belongs to the NadD family.

It carries out the reaction nicotinate beta-D-ribonucleotide + ATP + H(+) = deamido-NAD(+) + diphosphate. It functions in the pathway cofactor biosynthesis; NAD(+) biosynthesis; deamido-NAD(+) from nicotinate D-ribonucleotide: step 1/1. Its function is as follows. Catalyzes the reversible adenylation of nicotinate mononucleotide (NaMN) to nicotinic acid adenine dinucleotide (NaAD). The polypeptide is Probable nicotinate-nucleotide adenylyltransferase (Lactiplantibacillus plantarum (strain ATCC BAA-793 / NCIMB 8826 / WCFS1) (Lactobacillus plantarum)).